The chain runs to 358 residues: MFDKLEDLIHHYEELMNLLSEPDVANDANRFKKLMKEQSDLAPIVETYKKYKECKQNIEDSLAILDEESDEEMRELAKEELKDSKEQVEELEKKLKILLLPKDPNDDKNVIVEIRAGAGGEEAALFAAEIYRMYVHYAENRGWKVETLDADETGIGGMKSVEFMVKGSGAYSILKYESGVHRVQRVPETESQGRIQTSTCSVAVMPEAEDVDVKIDDKDIRIDVMRASGNGGQCVNTTDSAVRLTHYPTGIVIYSQTEKSQIQNKEKAFALLRTKLYDMELQKKQDAEAEERRSQIGTGDRAEKIRTYNFPQGRVTDHRINLTLYKLDKILNGDIQEIIDACIAADQAKKLSNMEHDA.

Gln-233 bears the N5-methylglutamine mark.

The protein belongs to the prokaryotic/mitochondrial release factor family. Methylated by PrmC. Methylation increases the termination efficiency of RF1.

It localises to the cytoplasm. Peptide chain release factor 1 directs the termination of translation in response to the peptide chain termination codons UAG and UAA. The sequence is that of Peptide chain release factor 1 from Agathobacter rectalis (strain ATCC 33656 / DSM 3377 / JCM 17463 / KCTC 5835 / VPI 0990) (Eubacterium rectale).